We begin with the raw amino-acid sequence, 134 residues long: Cytochrome c-type biogenesis protein CcmE (134 aa).

Residues 1–7 (MKRKYRR) lie on the Cytoplasmic side of the membrane. The helical; Signal-anchor for type II membrane protein transmembrane segment at 8–28 (LFVVIITLSIFAGSVVLVLGK) threads the bilayer. Residues 29 to 134 (LKNNVSFFYT…MPNKYKTNDL (106 aa)) are Periplasmic-facing. Heme contacts are provided by histidine 120 and tyrosine 124.

This sequence belongs to the CcmE/CycJ family.

It localises to the cell inner membrane. Functionally, heme chaperone required for the biogenesis of c-type cytochromes. Transiently binds heme delivered by CcmC and transfers the heme to apo-cytochromes in a process facilitated by CcmF and CcmH. This Ehrlichia ruminantium (strain Welgevonden) protein is Cytochrome c-type biogenesis protein CcmE.